An 851-amino-acid chain; its full sequence is Receptor like protein kinase S.2 (851 aa).

Residues 117-436 (FSDELILGSG…LPSFKSHPLY (320 aa)) form the Protein kinase 1 domain. ATP contacts are provided by residues 123–131 (LGSGGFGRV) and Lys-146. The Proton acceptor role is filled by Asp-248. The interval 448-471 (SATTTTTRTTMTTTTSTTSFNASS) is disordered. In terms of domain architecture, Protein kinase 2 spans 532 to 819 (FSDARRVAEV…SILDGSERFF (288 aa)). ATP contacts are provided by residues 538–546 (VAEVDFGTA) and Lys-560.

This sequence belongs to the protein kinase superfamily. Ser/Thr protein kinase family.

It catalyses the reaction L-seryl-[protein] + ATP = O-phospho-L-seryl-[protein] + ADP + H(+). The catalysed reaction is L-threonyl-[protein] + ATP = O-phospho-L-threonyl-[protein] + ADP + H(+). This chain is Receptor like protein kinase S.2 (LECRKS2), found in Arabidopsis thaliana (Mouse-ear cress).